Here is an 844-residue protein sequence, read N- to C-terminus: RPA-related protein RADX (844 aa).

The segment at residues 228 to 331 (WHNRKNFPAL…LISTMEICLN (104 aa)) is a DNA-binding region (OB). Disordered regions lie at residues 571–609 (PASE…RPMD) and 626–664 (GPTA…TGKS). The span at 572–587 (ASETLQNASPPSTSQA) shows a compositional bias: polar residues. A compositionally biased stretch (basic and acidic residues) spans 590–608 (KEGHYHERGSKRSQDDRPM). Positions 652–662 (SRENSTANATG) are enriched in polar residues.

It localises to the chromosome. Its function is as follows. Single-stranded DNA-binding protein recruited to replication forks to maintain genome stability. Prevents fork collapse by antagonizing the accumulation of RAD51 at forks to ensure the proper balance of fork remodeling and protection without interfering with the capacity of cells to complete homologous recombination of double-strand breaks. The polypeptide is RPA-related protein RADX (Rattus norvegicus (Rat)).